The primary structure comprises 151 residues: UPF0208 membrane protein YPDSF_1972 (151 aa).

A run of 2 helical transmembrane segments spans residues F46–G66 and L69–W89.

Belongs to the UPF0208 family.

Its subcellular location is the cell inner membrane. In Yersinia pestis (strain Pestoides F), this protein is UPF0208 membrane protein YPDSF_1972.